A 194-amino-acid chain; its full sequence is Imidazoleglycerol-phosphate dehydratase (194 aa).

Belongs to the imidazoleglycerol-phosphate dehydratase family.

It localises to the cytoplasm. It carries out the reaction D-erythro-1-(imidazol-4-yl)glycerol 3-phosphate = 3-(imidazol-4-yl)-2-oxopropyl phosphate + H2O. The protein operates within amino-acid biosynthesis; L-histidine biosynthesis; L-histidine from 5-phospho-alpha-D-ribose 1-diphosphate: step 6/9. This is Imidazoleglycerol-phosphate dehydratase from Chlorobaculum tepidum (strain ATCC 49652 / DSM 12025 / NBRC 103806 / TLS) (Chlorobium tepidum).